The sequence spans 399 residues: Elongation factor Tu (399 aa).

The tr-type G domain maps to 10-207 (KPHMNVGTIG…AMDTYFPDPV (198 aa)). The G1 stretch occupies residues 19 to 26 (GQIDHGKT). Position 19-26 (19-26 (GQIDHGKT)) interacts with GTP. T26 contacts Mg(2+). The segment at 60-64 (GITIN) is G2. Residues 81–84 (DCPG) form a G3 region. Residues 81–85 (DCPGH) and 136–139 (NKVD) contribute to the GTP site. The G4 stretch occupies residues 136–139 (NKVD). The segment at 173-175 (SAL) is G5.

The protein belongs to the TRAFAC class translation factor GTPase superfamily. Classic translation factor GTPase family. EF-Tu/EF-1A subfamily. Monomer.

The protein localises to the cytoplasm. It catalyses the reaction GTP + H2O = GDP + phosphate + H(+). GTP hydrolase that promotes the GTP-dependent binding of aminoacyl-tRNA to the A-site of ribosomes during protein biosynthesis. In Fervidobacterium islandicum, this protein is Elongation factor Tu.